Here is a 300-residue protein sequence, read N- to C-terminus: Protoheme IX farnesyltransferase 1 (300 aa).

9 helical membrane-spanning segments follow: residues 28–48 (VVAL…PTIL), 54–74 (VAGL…NHLI), 100–120 (ALLF…VFTN), 122–142 (LTAW…TAYL), 149–169 (NIVI…TAVT), 176–196 (ALLL…ALAI), 222–242 (CILL…LVGM), 243–263 (SGPL…YKAW), and 280–300 (FSIY…YLWA).

It belongs to the UbiA prenyltransferase family. Protoheme IX farnesyltransferase subfamily.

It localises to the cell inner membrane. The catalysed reaction is heme b + (2E,6E)-farnesyl diphosphate + H2O = Fe(II)-heme o + diphosphate. Its pathway is porphyrin-containing compound metabolism; heme O biosynthesis; heme O from protoheme: step 1/1. Its function is as follows. Converts heme B (protoheme IX) to heme O by substitution of the vinyl group on carbon 2 of heme B porphyrin ring with a hydroxyethyl farnesyl side group. The chain is Protoheme IX farnesyltransferase 1 from Shewanella sp. (strain MR-4).